We begin with the raw amino-acid sequence, 196 residues long: dTTP/UTP pyrophosphatase (196 aa).

Catalysis depends on D78, which acts as the Proton acceptor.

Belongs to the Maf family. YhdE subfamily. Requires a divalent metal cation as cofactor.

Its subcellular location is the cytoplasm. It catalyses the reaction dTTP + H2O = dTMP + diphosphate + H(+). It carries out the reaction UTP + H2O = UMP + diphosphate + H(+). Functionally, nucleoside triphosphate pyrophosphatase that hydrolyzes dTTP and UTP. May have a dual role in cell division arrest and in preventing the incorporation of modified nucleotides into cellular nucleic acids. The sequence is that of dTTP/UTP pyrophosphatase from Photobacterium profundum (strain SS9).